The following is a 621-amino-acid chain: Probable serine/threonine-protein kinase WNK2 (621 aa).

Positions 28–286 (GRYTEVLGKG…AQELLMDPFL (259 aa)) constitute a Protein kinase domain. Residues 108–111 (TEVF) and lysine 158 each bind ATP. Aspartate 175 acts as the Proton acceptor in catalysis. Disordered stretches follow at residues 438 to 490 (SVEN…SDSP), 501 to 520 (VEPHIGGNMPNGILKKNDTD), 527 to 553 (GTSVDLPNPSMIDRKSGVASVSTSPQS), and 600 to 621 (HREETLTRCRLKADERNRSDKP).

Belongs to the protein kinase superfamily. Ser/Thr protein kinase family. WNK subfamily.

The enzyme catalyses L-seryl-[protein] + ATP = O-phospho-L-seryl-[protein] + ADP + H(+). It catalyses the reaction L-threonyl-[protein] + ATP = O-phospho-L-threonyl-[protein] + ADP + H(+). In Oryza sativa subsp. japonica (Rice), this protein is Probable serine/threonine-protein kinase WNK2 (WNK2).